The following is a 496-amino-acid chain: Maturase K (496 aa).

Belongs to the intron maturase 2 family. MatK subfamily.

It is found in the plastid. It localises to the chloroplast. Usually encoded in the trnK tRNA gene intron. Probably assists in splicing its own and other chloroplast group II introns. This is Maturase K from Paeonia suffruticosa (Tree peony).